The primary structure comprises 591 residues: MRSHYCGDVNKSHVGQEVTLVGWVNRSRDLGGVVFLDLRDREGLVQVVYDPDLPEVFNVASTLRAEFCVQVKGLVRARPNSQVNAQMKTGEIEVLGKELTIINSSEPLPLSLDNYQNNSEEQRLKYRYLDLRRPEMAQRLMFRAKVTSAVRRFLDSNGFLDIETPILTKATPEGARDYLVPSRTYKGQFFALPQSPQLFKQLLMMSGFDRYYQIVKCFRDEDLRADRQPEFTQIDIETSFMTSEQVMAKTEEMMRGLFLEMLNVDLGEFPRMTYNEAMRRFGSDKPDLRNPLELVDVADLLKEVEFAVFSGPANDEEGRVAALRIPGGASLSRKQIDDYTKFVGIYGAKGLAWMKLNDLTQGLEGIQSPVLKFLNEDIVNEIISRTGAQTGDIILFGADNATVVAESMGALRLKAGEDFNLLEGQWRPLWVVDFPMFEKINGSFHAVHHPFTAPRGVTPQELEANPANRVSDAYDMVLNGCELGGGSVRIHNQEMQSAVFRILGITDEEAKEKFGFLLEALRYGTPPHAGLAFGLDRIIMLMTGASSIRDVMAFPKTTTAACPLTNAPGFANPQQLAELGISVVKAAKTED.

L-aspartate is bound at residue E173. Residues 197 to 200 (QLFK) are aspartate. R219 is an L-aspartate binding site. ATP is bound by residues 219-221 (RDE) and Q228. H448 is a binding site for L-aspartate. Residue E482 participates in ATP binding. Position 489 (R489) interacts with L-aspartate. Residue 534 to 537 (GLDR) coordinates ATP.

This sequence belongs to the class-II aminoacyl-tRNA synthetase family. Type 1 subfamily. In terms of assembly, homodimer.

It localises to the cytoplasm. The enzyme catalyses tRNA(Asp) + L-aspartate + ATP = L-aspartyl-tRNA(Asp) + AMP + diphosphate. Functionally, catalyzes the attachment of L-aspartate to tRNA(Asp) in a two-step reaction: L-aspartate is first activated by ATP to form Asp-AMP and then transferred to the acceptor end of tRNA(Asp). In Shewanella sp. (strain MR-4), this protein is Aspartate--tRNA ligase.